Reading from the N-terminus, the 235-residue chain is Putative N-acetylmannosamine-6-phosphate 2-epimerase (235 aa).

This sequence belongs to the NanE family.

It catalyses the reaction an N-acyl-D-glucosamine 6-phosphate = an N-acyl-D-mannosamine 6-phosphate. It functions in the pathway amino-sugar metabolism; N-acetylneuraminate degradation; D-fructose 6-phosphate from N-acetylneuraminate: step 3/5. In terms of biological role, converts N-acetylmannosamine-6-phosphate (ManNAc-6-P) to N-acetylglucosamine-6-phosphate (GlcNAc-6-P). The sequence is that of Putative N-acetylmannosamine-6-phosphate 2-epimerase from Edwardsiella ictaluri (strain 93-146).